Consider the following 85-residue polypeptide: CDC42 small effector protein 2 (85 aa).

2 S-palmitoyl cysteine lipidation sites follow: Cys-10 and Cys-11. The region spanning 29-42 (IGEPTNFVHTAHVG) is the CRIB domain.

The protein belongs to the CDC42SE/SPEC family.

It is found in the cytoplasm. The protein localises to the cytoskeleton. The protein resides in the cell membrane. In terms of biological role, probably involved in the organization of the actin cytoskeleton by acting downstream of CDC42, inducing actin filament assembly. The polypeptide is CDC42 small effector protein 2 (cdc42se2) (Danio rerio (Zebrafish)).